Here is a 242-residue protein sequence, read N- to C-terminus: Probable 2-phosphosulfolactate phosphatase (242 aa).

It belongs to the ComB family. Requires Mg(2+) as cofactor.

It catalyses the reaction (2R)-O-phospho-3-sulfolactate + H2O = (2R)-3-sulfolactate + phosphate. In Picosynechococcus sp. (strain ATCC 27264 / PCC 7002 / PR-6) (Agmenellum quadruplicatum), this protein is Probable 2-phosphosulfolactate phosphatase.